The primary structure comprises 513 residues: Zinc finger CCCH-type with G patch domain-containing protein (513 aa).

The C3H1-type zinc-finger motif lies at 155–178 (PCSYYLEGECRFDETKCRFSHGAL). 2 stretches are compositionally biased toward acidic residues: residues 252-261 (DQDEDDELSS) and 271-283 (DSSD…MDDL). The interval 252-283 (DQDEDDELSSEESNSSMNDDSSDEAESDMDDL) is disordered. In terms of domain architecture, G-patch spans 312–358 (TRGIGSKLMEKMGYIHGTGLGSDGRGIVTPVSAQILPQGRSLDACME). Positions 455 to 467 (DMAKVKQSLDRNS) are enriched in basic and acidic residues. The interval 455-513 (DMAKVKQSLDRNSGDAQLQKRLQVQMESHKQELATLQAQERSLSKEQQTRKSKNKMFEF) is disordered. A compositionally biased stretch (polar residues) spans 468 to 480 (GDAQLQKRLQVQM). Residues 496-513 (SLSKEQQTRKSKNKMFEF) show a composition bias toward basic and acidic residues.

The protein resides in the nucleus. Transcription repressor. This is Zinc finger CCCH-type with G patch domain-containing protein from Drosophila yakuba (Fruit fly).